The sequence spans 185 residues: Photosystem I assembly protein Ycf4 (185 aa).

A run of 2 helical transmembrane segments spans residues 21 to 43 and 63 to 85; these read NFFW…ISSY and GVVM…CTIL.

It belongs to the Ycf4 family.

The protein resides in the plastid. Its subcellular location is the chloroplast thylakoid membrane. Functionally, seems to be required for the assembly of the photosystem I complex. In Aegilops crassa (Persian goatgrass), this protein is Photosystem I assembly protein Ycf4.